Here is a 539-residue protein sequence, read N- to C-terminus: NADH-quinone oxidoreductase subunit N 2 (539 aa).

The next 13 helical transmembrane spans lie at 11–31, 52–72, 106–126, 141–161, 193–213, 248–268, 296–316, 329–349, 357–377, 385–405, 429–449, 462–484, and 500–520; these read LIPEFLLLAIAAMVLLGDVLT, LMGLGLAFVMVLIQGGFFSWM, PLTHIGRLVFIGAAFVTVILT, LILFATLGMIFMTAGGELIMI, YIFGALSSAILLFGMSLLLGL, GVAILALLFILAGMAYKVAIV, AGFFLLYRVLVTGFGAPSILG, WTSLIAILAALTMLVGNLAAL, MLAYSSIAQAGFLMLGLVGTQ, LMYLIAYTVTNLSAFGILALV, LLLTVAILSLAGIPPLSGFFV, AKWLVIFAVSNTVISLYYYLRFL, and VGFGPGIVMTAITLLIFGLGI.

It belongs to the complex I subunit 2 family. NDH-1 is composed of 14 different subunits. Subunits NuoA, H, J, K, L, M, N constitute the membrane sector of the complex.

The protein resides in the cell membrane. It carries out the reaction a quinone + NADH + 5 H(+)(in) = a quinol + NAD(+) + 4 H(+)(out). Functionally, NDH-1 shuttles electrons from NADH, via FMN and iron-sulfur (Fe-S) centers, to quinones in the respiratory chain. The immediate electron acceptor for the enzyme in this species is believed to be ubiquinone. Couples the redox reaction to proton translocation (for every two electrons transferred, four hydrogen ions are translocated across the cytoplasmic membrane), and thus conserves the redox energy in a proton gradient. The polypeptide is NADH-quinone oxidoreductase subunit N 2 (Herpetosiphon aurantiacus (strain ATCC 23779 / DSM 785 / 114-95)).